A 249-amino-acid chain; its full sequence is Exosome complex component Rrp4 (249 aa).

The S1 motif domain maps to 73–144 (NDIVIGLVED…RSIDPVLSVK (72 aa)). The 58-residue stretch at 154–211 (GIVIDIMPVKVPRVIGKNKSMYETLTSKSGCSIFVANNGRIWATCPSRFSEEILIEAI) folds into the KH domain.

Belongs to the RRP4 family. As to quaternary structure, component of the archaeal exosome complex. Forms a trimer of Rrp4 and/or Csl4 subunits. The trimer associates with a hexameric ring-like arrangement composed of 3 Rrp41-Rrp42 heterodimers.

Its subcellular location is the cytoplasm. Its function is as follows. Non-catalytic component of the exosome, which is a complex involved in RNA degradation. Increases the RNA binding and the efficiency of RNA degradation. Confers strong poly(A) specificity to the exosome. This is Exosome complex component Rrp4 from Saccharolobus solfataricus (strain ATCC 35092 / DSM 1617 / JCM 11322 / P2) (Sulfolobus solfataricus).